The following is a 331-amino-acid chain: Proline-rich protein 33 (331 aa).

3 disordered regions span residues 1–112 (MGPQ…SVPR), 128–185 (SLES…PKVA), and 204–247 (APEP…APAS). Positions 94–105 (PEEPPVPRPPPG) are enriched in pro residues. Residues 149–169 (PPMAGPAAEAERVSSPAWASS) show a composition bias toward low complexity. A compositionally biased stretch (pro residues) spans 170-185 (PTPPSGPHPCPVPKVA). A compositionally biased stretch (low complexity) spans 217-238 (EPEVPTPTEQEVPAPTEQEVPA).

This Homo sapiens (Human) protein is Proline-rich protein 33 (PRR33).